The primary structure comprises 159 residues: Phosphopantetheine adenylyltransferase (159 aa).

Residue Thr-10 participates in substrate binding. Residues 10–11 (TF) and His-18 contribute to the ATP site. The substrate site is built by Lys-42, Met-74, and Arg-88. ATP contacts are provided by residues 89-91 (GLR), Glu-99, and 124-130 (WSFISSS).

It belongs to the bacterial CoaD family. As to quaternary structure, homohexamer. Mg(2+) serves as cofactor.

The protein localises to the cytoplasm. The catalysed reaction is (R)-4'-phosphopantetheine + ATP + H(+) = 3'-dephospho-CoA + diphosphate. It participates in cofactor biosynthesis; coenzyme A biosynthesis; CoA from (R)-pantothenate: step 4/5. Reversibly transfers an adenylyl group from ATP to 4'-phosphopantetheine, yielding dephospho-CoA (dPCoA) and pyrophosphate. This Salmonella choleraesuis (strain SC-B67) protein is Phosphopantetheine adenylyltransferase.